We begin with the raw amino-acid sequence, 324 residues long: Quinolinate synthase (324 aa).

Residues His39 and Ser56 each contribute to the iminosuccinate site. Cys101 serves as a coordination point for [4Fe-4S] cluster. Residues 127-129 (YIN) and Ser144 each bind iminosuccinate. Cys187 contributes to the [4Fe-4S] cluster binding site. Residues 213–215 (HPE) and Thr230 contribute to the iminosuccinate site. Cys280 is a [4Fe-4S] cluster binding site.

Belongs to the quinolinate synthase family. Type 2 subfamily. [4Fe-4S] cluster serves as cofactor.

It localises to the cytoplasm. The catalysed reaction is iminosuccinate + dihydroxyacetone phosphate = quinolinate + phosphate + 2 H2O + H(+). Its pathway is cofactor biosynthesis; NAD(+) biosynthesis; quinolinate from iminoaspartate: step 1/1. Functionally, catalyzes the condensation of iminoaspartate with dihydroxyacetone phosphate to form quinolinate. The sequence is that of Quinolinate synthase from Nostoc punctiforme (strain ATCC 29133 / PCC 73102).